Here is a 428-residue protein sequence, read N- to C-terminus: 3-phosphoshikimate 1-carboxyvinyltransferase (428 aa).

Lys-22, Ser-23, and Arg-27 together coordinate 3-phosphoshikimate. Phosphoenolpyruvate is bound at residue Lys-22. The phosphoenolpyruvate site is built by Gly-96 and Arg-124. 3-phosphoshikimate-binding residues include Ser-170, Ser-171, Gln-172, Ser-198, Asp-314, Asn-337, and Lys-341. Gln-172 contributes to the phosphoenolpyruvate binding site. Catalysis depends on Asp-314, which acts as the Proton acceptor. The phosphoenolpyruvate site is built by Arg-345, Arg-387, and Lys-412.

Belongs to the EPSP synthase family. Monomer.

The protein localises to the cytoplasm. It catalyses the reaction 3-phosphoshikimate + phosphoenolpyruvate = 5-O-(1-carboxyvinyl)-3-phosphoshikimate + phosphate. It participates in metabolic intermediate biosynthesis; chorismate biosynthesis; chorismate from D-erythrose 4-phosphate and phosphoenolpyruvate: step 6/7. Functionally, catalyzes the transfer of the enolpyruvyl moiety of phosphoenolpyruvate (PEP) to the 5-hydroxyl of shikimate-3-phosphate (S3P) to produce enolpyruvyl shikimate-3-phosphate and inorganic phosphate. The polypeptide is 3-phosphoshikimate 1-carboxyvinyltransferase (Photobacterium profundum (strain SS9)).